The primary structure comprises 162 residues: Probable tRNA (guanine(10)-N2)-dimethyltransferase (162 aa).

It belongs to the methyltransferase superfamily. Trm-G10 family. Monomer.

It localises to the cytoplasm. The catalysed reaction is guanosine(10) in tRNA + 2 S-adenosyl-L-methionine = N(2)-dimethylguanosine(10) in tRNA + 2 S-adenosyl-L-homocysteine + 2 H(+). Functionally, catalyzes the adenosylmethionine-dependent methylation of the exocyclic amino group (N(2)) of guanosine at position 10 of various tRNAs. Acts via a two-step process that leads to the formation of either N(2)-monomethyl (m(2)G) or N(2)-dimethylguanosine (m(2)(2)G). The chain is Probable tRNA (guanine(10)-N2)-dimethyltransferase (trmG10) from Methanothermococcus thermolithotrophicus (Methanococcus thermolithotrophicus).